Reading from the N-terminus, the 481-residue chain is 3-isopropylmalate dehydratase large subunit (481 aa).

[4Fe-4S] cluster is bound by residues Cys-357, Cys-417, and Cys-420.

Belongs to the aconitase/IPM isomerase family. LeuC type 1 subfamily. As to quaternary structure, heterodimer of LeuC and LeuD. Requires [4Fe-4S] cluster as cofactor.

The enzyme catalyses (2R,3S)-3-isopropylmalate = (2S)-2-isopropylmalate. The protein operates within amino-acid biosynthesis; L-leucine biosynthesis; L-leucine from 3-methyl-2-oxobutanoate: step 2/4. In terms of biological role, catalyzes the isomerization between 2-isopropylmalate and 3-isopropylmalate, via the formation of 2-isopropylmaleate. The chain is 3-isopropylmalate dehydratase large subunit from Mycolicibacterium vanbaalenii (strain DSM 7251 / JCM 13017 / BCRC 16820 / KCTC 9966 / NRRL B-24157 / PYR-1) (Mycobacterium vanbaalenii).